Here is a 561-residue protein sequence, read N- to C-terminus: 4-coumarate--CoA ligase 1 (561 aa).

Ser210, Ser211, Gly212, Thr213, Thr214, and Lys218 together coordinate ATP. (E)-4-coumaroyl-AMP is bound by residues Tyr260 and Ser264. Lys281 provides a ligand contact to CoA. Residues 283 to 352 (EINLLLELIQ…AKFPNAKLGQ (70 aa)) form an SBD1 region. Residues Ala330, Gln352, Gly353, Thr357, and Met365 each contribute to the (E)-4-coumaroyl-AMP site. Positions 352, 353, and 357 each coordinate ATP. Residues 353 to 420 (GYGMTEAGPV…IRGHQIMKGY (68 aa)) are SBD2. Positions 441 and 456 each coordinate ATP. (E)-4-coumaroyl-AMP-binding residues include Lys458 and Lys462. Positions 464 and 465 each coordinate CoA. ATP is bound at residue Lys547.

It belongs to the ATP-dependent AMP-binding enzyme family. The cofactor is Mg(2+). Preferentially expressed in roots, bolting stems and siliques. Also detected in leaves.

It catalyses the reaction (E)-4-coumarate + ATP + CoA = (E)-4-coumaroyl-CoA + AMP + diphosphate. The enzyme catalyses (E)-caffeate + ATP + CoA = (E)-caffeoyl-CoA + AMP + diphosphate. The catalysed reaction is (E)-ferulate + ATP + CoA = (E)-feruloyl-CoA + AMP + diphosphate. It carries out the reaction (E)-4-coumarate + ATP + H(+) = (E)-4-coumaroyl-AMP + diphosphate. It catalyses the reaction (E)-4-coumaroyl-AMP + CoA = (E)-4-coumaroyl-CoA + AMP + H(+). The enzyme catalyses (E)-caffeate + ATP + H(+) = (E)-caffeoyl-AMP + diphosphate. The catalysed reaction is (E)-caffeoyl-AMP + CoA = (E)-caffeoyl-CoA + AMP + H(+). It carries out the reaction (E)-ferulate + ATP + H(+) = (E)-feruloyl-AMP + diphosphate. It catalyses the reaction (E)-feruloyl-AMP + CoA = (E)-feruloyl-CoA + AMP + H(+). The protein operates within phytoalexin biosynthesis; 3,4',5-trihydroxystilbene biosynthesis; 3,4',5-trihydroxystilbene from trans-4-coumarate: step 1/2. Produces CoA thioesters of a variety of hydroxy- and methoxy-substituted cinnamic acids, which are used to synthesize several phenylpropanoid-derived compounds, including anthocyanins, flavonoids, isoflavonoids, coumarins, lignin, suberin and wall-bound phenolics. Follows a two-step reaction mechanism, wherein the carboxylate substrate first undergoes adenylation by ATP, followed by a thioesterification in the presence of CoA to yield the final CoA thioesters. The polypeptide is 4-coumarate--CoA ligase 1 (Arabidopsis thaliana (Mouse-ear cress)).